Reading from the N-terminus, the 58-residue chain is Potassium channel toxin alpha-KTx BmKcug1a (58 aa).

An N-terminal signal peptide occupies residues 1–21 (MKISFLLLLAIVICSIGWTEA). Gln22 bears the Pyrrolidone carboxylic acid mark. 3 cysteine pairs are disulfide-bonded: Cys28-Cys49, Cys34-Cys54, and Cys38-Cys56.

This sequence belongs to the short scorpion toxin superfamily. Potassium channel inhibitor family. Alpha-KTx 01 subfamily. As to expression, expressed by the venom gland.

It localises to the secreted. In terms of biological role, potent blocker of both large-conductance calcium-activated potassium channels (KCa1.1/KCNMA1) and voltage-gated potassium channels (Kv1.3/KCNA3 and ERG1/Kv11.1/KCNH2). The sequence is that of Potassium channel toxin alpha-KTx BmKcug1a from Olivierus martensii (Manchurian scorpion).